The following is a 61-amino-acid chain: Weak toxin CM-2a (61 aa).

Cystine bridges form between Cys3/Cys19, Cys12/Cys37, Cys41/Cys49, and Cys50/Cys55.

It belongs to the three-finger toxin family. Short-chain subfamily. Orphan group XX sub-subfamily. As to expression, expressed by the venom gland.

Its subcellular location is the secreted. The polypeptide is Weak toxin CM-2a (Naja annulifera (Banded Egyptian cobra)).